The chain runs to 362 residues: Homeobox protein extradenticle (362 aa).

A PBC domain is found at Pro34 to Asp225. Residues Glu41–Gly120 are PBC-A. The interval Asp123–Asp225 is PBC-B. The homeobox; TALE-type DNA-binding region spans Ala226 to Ile288. The disordered stretch occupies residues Gly305–Pro362.

It belongs to the TALE/PBX homeobox family.

It localises to the nucleus. In terms of biological role, transcription factor which acts with the selector homeodomain proteins altering the regulation of downstream target genes such as wingless (wg), teashirt (tsh) and decapentaplegic (dpp), thus affecting segmental identity. This Anopheles gambiae (African malaria mosquito) protein is Homeobox protein extradenticle.